Consider the following 204-residue polypeptide: Cytochrome c biogenesis ATP-binding export protein CcmA (204 aa).

One can recognise an ABC transporter domain in the interval 3-204 (LTVTDLAIAR…PLDDPDGDFL (202 aa)). 35-42 (GPNGAGKT) contributes to the ATP binding site.

It belongs to the ABC transporter superfamily. CcmA exporter (TC 3.A.1.107) family. In terms of assembly, the complex is composed of two ATP-binding proteins (CcmA) and two transmembrane proteins (CcmB).

The protein localises to the cell membrane. The enzyme catalyses heme b(in) + ATP + H2O = heme b(out) + ADP + phosphate + H(+). Functionally, part of the ABC transporter complex CcmAB involved in the biogenesis of c-type cytochromes; once thought to export heme, this seems not to be the case, but its exact role is uncertain. Responsible for energy coupling to the transport system. This chain is Cytochrome c biogenesis ATP-binding export protein CcmA, found in Ruegeria pomeroyi (strain ATCC 700808 / DSM 15171 / DSS-3) (Silicibacter pomeroyi).